Here is a 447-residue protein sequence, read N- to C-terminus: Cobyrinate a,c-diamide synthase (447 aa).

The GATase cobBQ-type domain maps to Lys252 to Tyr439. The active-site Nucleophile is the Cys331.

Belongs to the CobB/CbiA family. Mg(2+) is required as a cofactor.

The enzyme catalyses cob(II)yrinate + 2 L-glutamine + 2 ATP + 2 H2O = cob(II)yrinate a,c diamide + 2 L-glutamate + 2 ADP + 2 phosphate + 2 H(+). The catalysed reaction is Ni-sirohydrochlorin + 2 L-glutamine + 2 ATP + 2 H2O = Ni-sirohydrochlorin a,c-diamide + 2 L-glutamate + 2 ADP + 2 phosphate + 2 H(+). The protein operates within cofactor biosynthesis; adenosylcobalamin biosynthesis; cob(II)yrinate a,c-diamide from sirohydrochlorin (anaerobic route): step 10/10. Functionally, catalyzes the ATP-dependent amidation of the two carboxylate groups at positions a and c of cobyrinate, using either L-glutamine or ammonia as the nitrogen source. Involved in the biosynthesis of the unique nickel-containing tetrapyrrole coenzyme F430, the prosthetic group of methyl-coenzyme M reductase (MCR), which plays a key role in methanogenesis and anaerobic methane oxidation. Catalyzes the ATP-dependent amidation of the two carboxylate groups at positions a and c of Ni-sirohydrochlorin, using L-glutamine or ammonia as the nitrogen source. The protein is Cobyrinate a,c-diamide synthase of Methanococcus maripaludis (strain C7 / ATCC BAA-1331).